We begin with the raw amino-acid sequence, 418 residues long: Putative F-box protein At3g23950 (418 aa).

The F-box domain maps to 1 to 42; the sequence is MNIPPELTFEVLVRLPLKSLARFRSMCKEWKLVIDSEFFRDC.

The polypeptide is Putative F-box protein At3g23950 (Arabidopsis thaliana (Mouse-ear cress)).